The sequence spans 286 residues: uncharacterized protein (286 aa).

A run of 2 helical transmembrane segments spans residues 201 to 221 (VIYSITGAFSFIFGLGVLCET) and 231 to 251 (AIILGFIILILILAIVNYLMM).

Its subcellular location is the cell membrane. This is an uncharacterized protein from Methanocaldococcus jannaschii (strain ATCC 43067 / DSM 2661 / JAL-1 / JCM 10045 / NBRC 100440) (Methanococcus jannaschii).